The sequence spans 567 residues: Urease subunit alpha (567 aa).

One can recognise a Urease domain in the interval 129 to 567 (GGIDAHIHFI…LPLTQRYCLF (439 aa)). The Ni(2+) site is built by His-134, His-136, and Lys-217. Lys-217 carries the post-translational modification N6-carboxylysine. His-219 serves as a coordination point for substrate. Ni(2+)-binding residues include His-246 and His-272. His-320 (proton donor) is an active-site residue. Position 360 (Asp-360) interacts with Ni(2+).

This sequence belongs to the metallo-dependent hydrolases superfamily. Urease alpha subunit family. Heterotrimer of UreA (gamma), UreB (beta) and UreC (alpha) subunits. Three heterotrimers associate to form the active enzyme. Requires Ni cation as cofactor. In terms of processing, carboxylation allows a single lysine to coordinate two nickel ions.

Its subcellular location is the cytoplasm. It catalyses the reaction urea + 2 H2O + H(+) = hydrogencarbonate + 2 NH4(+). The protein operates within nitrogen metabolism; urea degradation; CO(2) and NH(3) from urea (urease route): step 1/1. The chain is Urease subunit alpha from Psychromonas ingrahamii (strain DSM 17664 / CCUG 51855 / 37).